We begin with the raw amino-acid sequence, 477 residues long: D-alanyl-D-alanine carboxypeptidase DacB (477 aa).

An N-terminal signal peptide occupies residues 1-20; it reads MRFSRFIIGLTSCIAFSVQA. Catalysis depends on Ser-62, which acts as the Acyl-ester intermediate. Lys-65 acts as the Proton acceptor in catalysis. The interval 90–263 is absent in class-A beta-lactamases; sequence GNVENGVLKG…YAGAILKDEL (174 aa). The active site involves Ser-306. Lys-417 contributes to the substrate binding site.

It belongs to the peptidase S13 family.

The protein localises to the periplasm. It catalyses the reaction Preferential cleavage: (Ac)2-L-Lys-D-Ala-|-D-Ala. Also transpeptidation of peptidyl-alanyl moieties that are N-acyl substituents of D-alanine.. It participates in cell wall biogenesis; peptidoglycan biosynthesis. Not involved in transpeptidation but exclusively catalyzes a DD-carboxypeptidase and DD-endopeptidase reaction. This Escherichia coli (strain K12) protein is D-alanyl-D-alanine carboxypeptidase DacB (dacB).